Reading from the N-terminus, the 513-residue chain is Dye-decolorizing peroxidase msp1 (513 aa).

A signal peptide spans 1–20 (MKLFSASVFAAIIASHYASA). Positions 21-55 (TAHIRAPNVKPRRTNSLLTAPPQQPPLPSAQQAAS) are excised as a propeptide. The tract at residues 33 to 52 (RTNSLLTAPPQQPPLPSAQQ) is disordered. Catalysis depends on Asp228, which acts as the Proton acceptor. His365 provides a ligand contact to heme.

As to quaternary structure, homodimer. The cofactor is heme b.

The protein resides in the secreted. It carries out the reaction Reactive Blue 5 + 2 H2O2 = 2,2'-disulfonyl azobenzene + 3-[(4-amino-6-chloro-1,3,5-triazin-2-yl)amino]benzenesulfonate + phthalate + 2 H2O + 2 H(+). The catalysed reaction is 2 a phenolic donor + H2O2 = 2 a phenolic radical donor + 2 H2O. Functionally, manganese-independent peroxidase that is able to convert a large number of compounds, but its physiological substrate is not known. In addition to classic peroxidase substrates (e.g. 2,6-dimethoxyphenol), oxidizes dyes such as Reactive Blue 5. Also degrades beta-carotene. The chain is Dye-decolorizing peroxidase msp1 from Mycetinis scorodonius (Garlic mushroom).